The primary structure comprises 201 residues: LexA repressor (201 aa).

The H-T-H motif DNA-binding region spans 28–48 (LREIAAKLGISGTLGVMKHLE). Residues Ser120 and Lys157 each act as for autocatalytic cleavage activity in the active site.

It belongs to the peptidase S24 family. As to quaternary structure, homodimer.

It catalyses the reaction Hydrolysis of Ala-|-Gly bond in repressor LexA.. In terms of biological role, represses a number of genes involved in the response to DNA damage (SOS response), including recA and lexA. In the presence of single-stranded DNA, RecA interacts with LexA causing an autocatalytic cleavage which disrupts the DNA-binding part of LexA, leading to derepression of the SOS regulon and eventually DNA repair. This is LexA repressor from Geobacter sp. (strain M21).